The primary structure comprises 423 residues: Sorting nexin-4 (423 aa).

Residues 1-21 are compositionally biased toward basic and acidic residues; sequence MTDKGKNDLTSKAKDKARGNP. The disordered stretch occupies residues 1 to 25; it reads MTDKGKNDLTSKAKDKARGNPEKPP. One can recognise a PX domain in the interval 29–157; it reads EIIVSDPQKR…TFLVSKDWES (129 aa). 4 residues coordinate a 1,2-diacyl-sn-glycero-3-phospho-(1D-myo-inositol-3-phosphate): R78, S80, K104, and R123. Coiled-coil stretches lie at residues 217-252 and 346-381; these read KKND…AKLK and SRRE…ECLK.

The protein belongs to the sorting nexin family. In terms of assembly, forms a complex with ATG20 and ATG17. Binds also to SNC1 and SNX41.

The protein localises to the cytoplasm. It is found in the cytosol. The protein resides in the preautophagosomal structure membrane. Its subcellular location is the endosome membrane. Its function is as follows. Sorting nexin, involved in the separation or division of vacuoles throughout the entire life cycle of the cells. Involved in retrieval of late-Golgi SNAREs from post-Golgi endosomes to the trans-Golgi network, for cytoplasm to vacuole transport (Cvt), and autophagy of large cargos including mitophagy, pexophagy and glycophagy. Involved in proper sorting of the v-SNARE protein SNC1. This is Sorting nexin-4 from Saccharomyces cerevisiae (strain ATCC 204508 / S288c) (Baker's yeast).